The sequence spans 243 residues: 1-(5-phosphoribosyl)-5-[(5-phosphoribosylamino)methylideneamino] imidazole-4-carboxamide isomerase (243 aa).

Aspartate 8 serves as the catalytic Proton acceptor. Residue aspartate 128 is the Proton donor of the active site.

The protein belongs to the HisA/HisF family.

The protein localises to the cytoplasm. It carries out the reaction 1-(5-phospho-beta-D-ribosyl)-5-[(5-phospho-beta-D-ribosylamino)methylideneamino]imidazole-4-carboxamide = 5-[(5-phospho-1-deoxy-D-ribulos-1-ylimino)methylamino]-1-(5-phospho-beta-D-ribosyl)imidazole-4-carboxamide. Its pathway is amino-acid biosynthesis; L-histidine biosynthesis; L-histidine from 5-phospho-alpha-D-ribose 1-diphosphate: step 4/9. In Opitutus terrae (strain DSM 11246 / JCM 15787 / PB90-1), this protein is 1-(5-phosphoribosyl)-5-[(5-phosphoribosylamino)methylideneamino] imidazole-4-carboxamide isomerase.